A 225-amino-acid polypeptide reads, in one-letter code: Glutathione S-transferase Mu 5 (225 aa).

The 88-residue stretch at 5-92 folds into the GST N-terminal domain; that stretch reads KSMVLGYWDI…YIARKHNMCG (88 aa). A Phosphoserine modification is found at Ser-6. Glutathione contacts are provided by residues 11-12, 50-54, 63-64, and 76-77; these read YW, WLDVK, NL, and QS. The region spanning 94–212 is the GST C-terminal domain; the sequence is TEEEKIRVDI…QSDRCFKMPI (119 aa). Substrate is bound at residue Tyr-120.

The protein belongs to the GST superfamily. Mu family. As to quaternary structure, homodimer. Post-translationally, the N-terminus is blocked. As to expression, expressed in testis and brain. Very low expression in liver, kidney, heart and lung.

Its subcellular location is the cytoplasm. It carries out the reaction RX + glutathione = an S-substituted glutathione + a halide anion + H(+). Its function is as follows. Conjugation of reduced glutathione to a wide number of exogenous and endogenous hydrophobic electrophiles. The protein is Glutathione S-transferase Mu 5 (Gstm5) of Rattus norvegicus (Rat).